Reading from the N-terminus, the 480-residue chain is tRNA (guanine(37)-N(1))-methyltransferase (480 aa).

Residues 1–18 constitute a mitochondrion transit peptide; it reads MAAVWRRSARLFILLQRH. Residues H273, 311–312, 339–340, and N367 contribute to the S-adenosyl-L-methionine site; these read DL and DG. The tract at residues 458 to 480 is disordered; the sequence is HTQDRDTSEEPCPKKQKCEDSTN.

This sequence belongs to the class I-like SAM-binding methyltransferase superfamily. TRM5/TYW2 family. Monomer.

It localises to the mitochondrion matrix. The protein resides in the nucleus. The protein localises to the cytoplasm. The catalysed reaction is guanosine(37) in tRNA + S-adenosyl-L-methionine = N(1)-methylguanosine(37) in tRNA + S-adenosyl-L-homocysteine + H(+). Functionally, involved in mitochondrial tRNA methylation. Specifically methylates the N1 position of guanosine-37 in various tRNAs. Methylation is not dependent on the nature of the nucleoside 5' of the target nucleoside. This is the first step in the biosynthesis of wybutosine (yW), a modified base adjacent to the anticodon of tRNAs and required for accurate decoding. This Danio rerio (Zebrafish) protein is tRNA (guanine(37)-N(1))-methyltransferase (trmt5).